A 1116-amino-acid chain; its full sequence is uncharacterized protein (1116 aa).

EF-hand domains lie at 8-43, 42-77, 166-201, and 292-327; these read EEQTAFDQLFKIADKQDIGVITGEEAVPFLEKSGLA, LAPQVLGQIWQIADAENRGFLTFSGFVIAMRLVALA, LSTEILARVWNLVDTHKRGALDIREFNTGMHIINLL, and LPEDVLAQIWDLSDTNSNGKLNIGEFCISLYLIKLK. 3 consecutive EH domains span residues 9–106, 134–224, and 259–348; these read EQTA…DSSK, EMTR…AAST, and DLTS…VAPL. Ca(2+) is bound by residues D305, N307, N309, K311, and E316. 7 disordered regions span residues 360–454, 703–774, 812–890, 909–978, 1004–1024, 1044–1066, and 1095–1116; these read PSVV…NSPT, SVNL…ASTV, TSLS…NTSA, PFAT…SPQI, TTTHVQHPNSETIPSSTENQY, SNEVSQPFDFDTANESDNDDDEL, and QAAEIKDDDNSSTDEEEHAGHH. Positions 371-381 are enriched in pro residues; it reads NPNPTLAPNPT. Positions 401–416 are enriched in polar residues; the sequence is FSPTLAPQHTSSNATK. Positions 565-707 form a coiled coil; the sequence is KAQTEQVNRE…EDGLKSVNLT (143 aa). Over residues 723–749 the composition is skewed to polar residues; sequence SFTSNGITTDKPTLPDTTSSVPTQHNS. 2 stretches are compositionally biased toward low complexity: residues 755 to 774 and 812 to 827; these read NTLRSPSLNSNNSSAHASTV and TSLSVNNSSVNPSLDS. Over residues 864-890 the composition is skewed to polar residues; that stretch reads SKLTGSARNTAEPVENTSAEPIENTSA. The segment covering 957–969 has biased composition (acidic residues); that stretch reads EIDDDESSSDEEP. Composition is skewed to acidic residues over residues 1055–1066 and 1104–1116; these read TANESDNDDDEL and NSSTDEEEHAGHH.

It is found in the cytoplasm. The protein resides in the cytoskeleton. This is an uncharacterized protein from Schizosaccharomyces pombe (strain 972 / ATCC 24843) (Fission yeast).